Reading from the N-terminus, the 287-residue chain is Intermediate filament family orphan 2 (287 aa).

Positions 1-254 (MNLQTMVDTL…RLIKGSADRN (254 aa)) constitute an IF rod domain. The segment at 248–287 (KGSADRNSPSPSSVASSDSGSTDEIQDDLEREADVEPMVS) is disordered. Positions 255 to 267 (SPSPSSVASSDSG) are enriched in low complexity. Over residues 271 to 287 (EIQDDLEREADVEPMVS) the composition is skewed to acidic residues.

The protein belongs to the intermediate filament family.

In Rattus norvegicus (Rat), this protein is Intermediate filament family orphan 2 (Iffo2).